The sequence spans 970 residues: uncharacterized protein (970 aa).

The segment at 942-970 is disordered; sequence QLSFEEDGWTESEPRPVRREAHVRAKERH. Over residues 953 to 970 the composition is skewed to basic and acidic residues; that stretch reads SEPRPVRREAHVRAKERH.

This is an uncharacterized protein from Frog virus 3 (isolate Goorha) (FV-3).